The chain runs to 90 residues: U7-theraphotoxin-Hhn1a 2 (90 aa).

Positions 1–19 are cleaved as a signal peptide; that stretch reads MKIAIFTVVLALAVFAVLS. Residues 20–50 constitute a propeptide that is removed on maturation; it reads FGWEANEKALSEEFTELIHEKEAASETEARE. Intrachain disulfides connect C51–C65, C58–C70, and C64–C81.

It belongs to the neurotoxin 10 (Hwtx-1) family. 13 (Hntx-13) subfamily. As to expression, expressed by the venom gland.

Its subcellular location is the secreted. In terms of biological role, ion channel inhibitor. The protein is U7-theraphotoxin-Hhn1a 2 of Cyriopagopus hainanus (Chinese bird spider).